We begin with the raw amino-acid sequence, 298 residues long: Acetylglutamate kinase (298 aa).

Residues 67-68, Arg-89, and Asn-193 each bind substrate; that span reads GG.

It belongs to the acetylglutamate kinase family. ArgB subfamily.

It localises to the cytoplasm. It catalyses the reaction N-acetyl-L-glutamate + ATP = N-acetyl-L-glutamyl 5-phosphate + ADP. Its pathway is amino-acid biosynthesis; L-arginine biosynthesis; N(2)-acetyl-L-ornithine from L-glutamate: step 2/4. In terms of biological role, catalyzes the ATP-dependent phosphorylation of N-acetyl-L-glutamate. This chain is Acetylglutamate kinase, found in Desulfitobacterium hafniense (strain DSM 10664 / DCB-2).